The primary structure comprises 166 residues: Large ribosomal subunit protein bL9 (166 aa).

The protein belongs to the bacterial ribosomal protein bL9 family.

Functionally, binds to the 23S rRNA. The sequence is that of Large ribosomal subunit protein bL9 from Psychrobacter arcticus (strain DSM 17307 / VKM B-2377 / 273-4).